Consider the following 260-residue polypeptide: Ribonuclease PH (260 aa).

Phosphate is bound by residues R87 and 125 to 127 (GTR). The interval 232–260 (LAAPPAAGPPAPERAGAGSGSGGKGTGSR) is disordered. Residues 248–260 (AGSGSGGKGTGSR) are compositionally biased toward gly residues.

The protein belongs to the RNase PH family. Homohexameric ring arranged as a trimer of dimers.

The enzyme catalyses tRNA(n+1) + phosphate = tRNA(n) + a ribonucleoside 5'-diphosphate. Its function is as follows. Phosphorolytic 3'-5' exoribonuclease that plays an important role in tRNA 3'-end maturation. Removes nucleotide residues following the 3'-CCA terminus of tRNAs; can also add nucleotides to the ends of RNA molecules by using nucleoside diphosphates as substrates, but this may not be physiologically important. Probably plays a role in initiation of 16S rRNA degradation (leading to ribosome degradation) during starvation. The polypeptide is Ribonuclease PH (Parafrankia sp. (strain EAN1pec)).